The following is a 179-amino-acid chain: TM2 domain-containing protein Y66D12A.21 (179 aa).

A signal peptide spans 1-18 (MRQLLLTLSLISVSASDA). Residues 19–82 (TVKCDDLDPN…IFNRTVPSAC (64 aa)) are Extracellular-facing. Asn75 carries an N-linked (GlcNAc...) asparagine glycan. Residues 83–105 (HYGAHVSYTTTVLLSIFLGFFGI) traverse the membrane as a helical segment. The region spanning 88-135 (VSYTTTVLLSIFLGFFGIDRIYLGYYALGLIKMFSLGGLFVFWLVDII) is the TM2 domain. The Cytoplasmic segment spans residues 106–109 (DRIY). A helical membrane pass occupies residues 110-132 (LGYYALGLIKMFSLGGLFVFWLV). Topologically, residues 133–179 (DIILISLQLLGPADGTAYAMAYYGPKAQMIRFDSHTNFSFYTCDGCL) are extracellular. Asn169 carries N-linked (GlcNAc...) asparagine glycosylation.

This sequence belongs to the TM2 family.

Its subcellular location is the membrane. The chain is TM2 domain-containing protein Y66D12A.21 from Caenorhabditis elegans.